The primary structure comprises 213 residues: G2/mitotic-specific cyclin-1 (213 aa).

The disordered stretch occupies residues 1–23; it reads MKFSEEKNVSNNPTNFEGGLDSR.

The protein belongs to the cyclin family. Cyclin AB subfamily. As to quaternary structure, interacts with the CDC2 protein kinase to form a serine/threonine kinase holoenzyme complex also known as maturation promoting factor (MPF). The cyclin subunit imparts substrate specificity to the complex. In terms of tissue distribution, only expressed in organs with dividing cells.

Functionally, essential for the control of the cell cycle at the G2/M (mitosis) transition. This is G2/mitotic-specific cyclin-1 from Medicago sativa (Alfalfa).